The primary structure comprises 453 residues: tRNA-2-methylthio-N(6)-dimethylallyladenosine synthase (453 aa).

One can recognise an MTTase N-terminal domain in the interval 7-123 (GTYWITTFGC…LDTLLSQVEA (117 aa)). [4Fe-4S] cluster-binding residues include C16, C52, C86, C158, C162, and C165. A Radical SAM core domain is found at 144–381 (RDSSLCAWVN…NALVERKAKA (238 aa)). The 64-residue stretch at 384 to 447 (QRYLGRVEEV…AFSLSGSAQA (64 aa)) folds into the TRAM domain.

Belongs to the methylthiotransferase family. MiaB subfamily. Monomer. The cofactor is [4Fe-4S] cluster.

The protein resides in the cytoplasm. It catalyses the reaction N(6)-dimethylallyladenosine(37) in tRNA + (sulfur carrier)-SH + AH2 + 2 S-adenosyl-L-methionine = 2-methylsulfanyl-N(6)-dimethylallyladenosine(37) in tRNA + (sulfur carrier)-H + 5'-deoxyadenosine + L-methionine + A + S-adenosyl-L-homocysteine + 2 H(+). In terms of biological role, catalyzes the methylthiolation of N6-(dimethylallyl)adenosine (i(6)A), leading to the formation of 2-methylthio-N6-(dimethylallyl)adenosine (ms(2)i(6)A) at position 37 in tRNAs that read codons beginning with uridine. This is tRNA-2-methylthio-N(6)-dimethylallyladenosine synthase from Synechococcus sp. (strain RCC307).